Here is a 377-residue protein sequence, read N- to C-terminus: Protein ECM9 (377 aa).

Its function is as follows. May be involved in cell wall organization and biogenesis. The protein is Protein ECM9 (ECM9) of Saccharomyces cerevisiae (strain ATCC 204508 / S288c) (Baker's yeast).